Consider the following 447-residue polypeptide: Cysteine--tRNA ligase (447 aa).

Residue Cys28 participates in Zn(2+) binding. Residues 30 to 40 carry the 'HIGH' region motif; the sequence is PTVYNYIHIGN. The Zn(2+) site is built by Cys211, His236, and Glu240. Positions 268–272 match the 'KMSKS' region motif; the sequence is KMSKS. Residue Lys271 coordinates ATP.

This sequence belongs to the class-I aminoacyl-tRNA synthetase family. In terms of assembly, monomer. It depends on Zn(2+) as a cofactor.

Its subcellular location is the cytoplasm. It catalyses the reaction tRNA(Cys) + L-cysteine + ATP = L-cysteinyl-tRNA(Cys) + AMP + diphosphate. This chain is Cysteine--tRNA ligase, found in Streptococcus pyogenes serotype M6 (strain ATCC BAA-946 / MGAS10394).